Consider the following 222-residue polypeptide: Adenylate kinase, chloroplastic (222 aa).

15-20 (ASGKGT) contacts ATP. The segment at 35–64 (SAGDLLRAEIAAGSENGKRAKEFMEKGQLV) is NMP. AMP-binding positions include R41, 62-64 (QLV), 91-94 (GYPR), and Q98. The tract at residues 128 to 161 (GRRLDPVTGKIYHLKYSPPENEEIASRLTQRFDD) is LID. Residue R129 participates in ATP binding. R158 contributes to the AMP binding site. A195 serves as a coordination point for ATP.

As to quaternary structure, monomer.

Its subcellular location is the plastid. It localises to the chloroplast. It carries out the reaction AMP + ATP = 2 ADP. Its function is as follows. Catalyzes the reversible transfer of the terminal phosphate group between ATP and AMP. Plays an important role in cellular energy homeostasis and in adenine nucleotide metabolism. The maize enzyme also works with CMP, albeit with 10% of the activity with AMP. This is Adenylate kinase, chloroplastic (ADK1) from Zea mays (Maize).